We begin with the raw amino-acid sequence, 188 residues long: Probable nicotinate-nucleotide adenylyltransferase (188 aa).

The protein belongs to the NadD family.

The enzyme catalyses nicotinate beta-D-ribonucleotide + ATP + H(+) = deamido-NAD(+) + diphosphate. It participates in cofactor biosynthesis; NAD(+) biosynthesis; deamido-NAD(+) from nicotinate D-ribonucleotide: step 1/1. In terms of biological role, catalyzes the reversible adenylation of nicotinate mononucleotide (NaMN) to nicotinic acid adenine dinucleotide (NaAD). The protein is Probable nicotinate-nucleotide adenylyltransferase of Solibacter usitatus (strain Ellin6076).